We begin with the raw amino-acid sequence, 407 residues long: Melanoma-associated antigen B6 (407 aa).

The interval 1-175 (MPRGHKSKLR…YDVAAEGEDE (175 aa)) is disordered. Polar residues-rich tracts occupy residues 18–29 (TNGQPQGLTGPQ), 57–71 (DASI…SPTG), 94–113 (PSTS…SPTG), and 136–155 (PSTS…SPTG). One can recognise an MAGE domain in the interval 195 to 394 (VKKKACTLAQ…GLYPHLYEDA (200 aa)).

Expressed in testis. Not expressed in other normal tissues, but is expressed in tumors of different histological origins.

The chain is Melanoma-associated antigen B6 (MAGEB6) from Homo sapiens (Human).